The primary structure comprises 680 residues: Transketolase 1 (680 aa).

H30 is a binding site for substrate. Residues H69 and 116–118 (GPL) contribute to the thiamine diphosphate site. Position 157 (D157) interacts with Mg(2+). 2 residues coordinate thiamine diphosphate: G158 and N187. N187 and I189 together coordinate Mg(2+). H263 lines the substrate pocket. H263 serves as a coordination point for thiamine diphosphate. A phosphoserine mark is found at S286 and S335. The substrate site is built by R359 and S386. Phosphoserine is present on S402. E418 and F445 together coordinate thiamine diphosphate. E418 (proton donor) is an active-site residue. Residues H469 and D477 each coordinate substrate. Residue S492 is modified to Phosphoserine. Substrate is bound at residue R528. A Glycyl lysine isopeptide (Lys-Gly) (interchain with G-Cter in ubiquitin) cross-link involves residue K647.

This sequence belongs to the transketolase family. Homodimer. Mg(2+) serves as cofactor. It depends on Ca(2+) as a cofactor. The cofactor is Mn(2+). Co(2+) is required as a cofactor. Requires thiamine diphosphate as cofactor.

It catalyses the reaction D-sedoheptulose 7-phosphate + D-glyceraldehyde 3-phosphate = aldehydo-D-ribose 5-phosphate + D-xylulose 5-phosphate. Functionally, catalyzes the transfer of a two-carbon ketol group from a ketose donor to an aldose acceptor, via a covalent intermediate with the cofactor thiamine pyrophosphate. The protein is Transketolase 1 (TKL1) of Saccharomyces cerevisiae (strain ATCC 204508 / S288c) (Baker's yeast).